Consider the following 189-residue polypeptide: Interferon alpha-6 (189 aa).

An N-terminal signal peptide occupies residues M1–G23. Intrachain disulfides connect C24–C122 and C52–C162. N101 carries N-linked (GlcNAc...) asparagine glycosylation.

The protein belongs to the alpha/beta interferon family.

Its subcellular location is the secreted. Its function is as follows. Produced by macrophages, IFN-alpha have antiviral activities. Interferon stimulates the production of two enzymes: a protein kinase and an oligoadenylate synthetase. The polypeptide is Interferon alpha-6 (Ifna6) (Mus musculus (Mouse)).